The primary structure comprises 746 residues: H(+)/Cl(-) exchange transporter 5 (746 aa).

The Cytoplasmic portion of the chain corresponds to 1–54; sequence MDFLEEPIPGVGTYDDFNTIDWVREKSRDRDRHREITNRSKESTWALIHSVSDA. 2 consecutive transmembrane segments (helical) span residues 55 to 92 and 138 to 161; these read FSGW…ICTE and VNYF…VKVF. Residues 167–171 carry the Selectivity filter part_1 motif; the sequence is GSGIP. Residue serine 168 coordinates chloride. The segment at residues 170-177 is an intramembrane region (helical); the sequence is IPEIKTIL. Transmembrane regions (helical) follow at residues 186–205 and 211–230; these read LGKW…VSSG and EGPL…HCFN. A Selectivity filter part_2 motif is present at residues 209–213; the sequence is GKEGP. 2 intramembrane regions (helical) span residues 242-254 and 258-266; these read VLSA…VSVA and PIGGVLFSL. Transmembrane regions (helical) follow at residues 278 to 296, 319 to 344, 352 to 372, 428 to 448, and 453 to 472; these read LWRS…RSIN, LVPF…IAWC, LGKY…ILAF, MWQL…TFGM, and GLFI…LGVG. The Selectivity filter part_3 motif lies at 453–457; sequence GLFIP. Phenylalanine 455 contacts chloride. Residues 500 to 514 constitute an intramembrane region (helical); sequence GLYAMVGAAACLGGV. The note=Loop between two helices intramembrane region spans 515 to 517; the sequence is TRM. Residues 518-529 constitute an intramembrane region (helical); sequence TVSLVVIMFELT. Positions 530-534 form an intramembrane region, note=Loop between two helices; it reads GGLEY. A helical transmembrane segment spans residues 535–552; it reads IVPLMAAAMTSKWVADAL. The Cytoplasmic segment spans residues 553–746; it reads GREGIYDAHI…NQDPDSILFN (194 aa). Chloride is bound at residue tyrosine 558. CBS domains follow at residues 586-650 and 682-742; these read MKPR…ARKE and ILDL…DPDS. ATP contacts are provided by residues threonine 596, 617-619, and 724-727; these read YSG and TKKD.

The protein belongs to the chloride channel (TC 2.A.49) family. ClC-5/CLCN5 subfamily. In terms of assembly, interacts with NEDD4 and NEDD4L. In terms of processing, ubiquitinated by NEDD4L in the presence of albumin; which promotes endocytosis and proteasomal degradation. Detected in duodenum, jejunum and ileum. Detected in crypt and villus regions of the epithelium of the small intestine.

The protein resides in the golgi apparatus membrane. Its subcellular location is the endosome membrane. It localises to the cell membrane. It catalyses the reaction 2 chloride(in) + H(+)(out) = 2 chloride(out) + H(+)(in). Functionally, proton-coupled chloride transporter. Functions as antiport system and exchanges chloride ions against protons. Important for normal acidification of the endosome lumen. May play an important role in renal tubular function. The CLC channel family contains both chloride channels and proton-coupled anion transporters that exchange chloride or another anion for protons. The absence of conserved gating glutamate residues is typical for family members that function as channels. In Cavia porcellus (Guinea pig), this protein is H(+)/Cl(-) exchange transporter 5 (CLCN5).